A 466-amino-acid chain; its full sequence is Alpha-1A adrenergic receptor (466 aa).

Residues 1–25 lie on the Extracellular side of the membrane; it reads MVFLSGNASDSSNCTQPPAPVNIPK. 2 N-linked (GlcNAc...) asparagine glycosylation sites follow: asparagine 7 and asparagine 13. Residues 26 to 51 form a helical membrane-spanning segment; it reads AILLGVILGVLILFGVPGNILVILSV. At 52-63 the chain is on the cytoplasmic side; the sequence is ACHRHLHSVTHY. Residues 64–89 traverse the membrane as a helical segment; that stretch reads YIVNLAVADLLLTSTVLPFSAIFEIL. Residues 90–99 lie on the Extracellular side of the membrane; sequence GYWAFGRVFC. A helical transmembrane segment spans residues 100 to 122; the sequence is NIWAAVDVLCCTASIMSLCIISI. The Cytoplasmic portion of the chain corresponds to 123 to 143; sequence DRYIGVSYPLRYPTIVTQRRG. Residues 144–168 traverse the membrane as a helical segment; the sequence is LRALLCLWALSLVISIGPLFGWRQP. Topologically, residues 169 to 181 are extracellular; it reads APQDETICQINED. A helical membrane pass occupies residues 182–205; the sequence is PSYVLFSALGSFYVPLAIILVMYC. Topologically, residues 206–272 are cytoplasmic; the sequence is RVYVVAKRES…KFSREKKAAK (67 aa). The helical transmembrane segment at 273-297 threads the bilayer; the sequence is TLGIVVGCFVLCWLPFFLVMPIGSF. The Extracellular portion of the chain corresponds to 298–304; the sequence is FPDFKPS. A helical transmembrane segment spans residues 305–329; the sequence is ETVFKIVFWLGYLNSCINPIIYPCS. Topologically, residues 330–466 are cytoplasmic; the sequence is SQEFKKAFQN…ISLSENGEEV (137 aa). The short motif at 334-349 is the Nuclear localization signal element; sequence KKAFQNVLKIQCLRRK. Residue cysteine 345 is the site of S-palmitoyl cysteine attachment.

It belongs to the G-protein coupled receptor 1 family. Adrenergic receptor subfamily. ADRA1A sub-subfamily. As to quaternary structure, homo- and heterooligomer. Heterooligomerizes with ADRA1B homooligomers in cardiac myocytes. Interacts with CAVIN4.

The protein localises to the nucleus membrane. Its subcellular location is the cell membrane. The protein resides in the cytoplasm. It is found in the membrane. It localises to the caveola. In terms of biological role, this alpha-adrenergic receptor mediates its action by association with G proteins that activate a phosphatidylinositol-calcium second messenger system. Its effect is mediated by G(q) and G(11) proteins. Nuclear ADRA1A-ADRA1B heterooligomers regulate phenylephrine (PE)-stimulated ERK signaling in cardiac myocytes. The protein is Alpha-1A adrenergic receptor (ADRA1A) of Cavia porcellus (Guinea pig).